Here is a 500-residue protein sequence, read N- to C-terminus: Lysine--tRNA ligase (500 aa).

The Mg(2+) site is built by E411 and E418.

Belongs to the class-II aminoacyl-tRNA synthetase family. Homodimer. Mg(2+) is required as a cofactor.

It is found in the cytoplasm. It carries out the reaction tRNA(Lys) + L-lysine + ATP = L-lysyl-tRNA(Lys) + AMP + diphosphate. This Actinobacillus pleuropneumoniae serotype 7 (strain AP76) protein is Lysine--tRNA ligase.